Here is a 140-residue protein sequence, read N- to C-terminus: ATP synthase epsilon chain (140 aa).

It belongs to the ATPase epsilon chain family. As to quaternary structure, F-type ATPases have 2 components, CF(1) - the catalytic core - and CF(0) - the membrane proton channel. CF(1) has five subunits: alpha(3), beta(3), gamma(1), delta(1), epsilon(1). CF(0) has three main subunits: a, b and c.

Its subcellular location is the cell inner membrane. Its function is as follows. Produces ATP from ADP in the presence of a proton gradient across the membrane. This is ATP synthase epsilon chain from Legionella pneumophila (strain Paris).